The primary structure comprises 91 residues: Small ribosomal subunit protein uS19 (91 aa).

It belongs to the universal ribosomal protein uS19 family.

Protein S19 forms a complex with S13 that binds strongly to the 16S ribosomal RNA. In Verminephrobacter eiseniae (strain EF01-2), this protein is Small ribosomal subunit protein uS19.